Reading from the N-terminus, the 519-residue chain is MGRTRKANVCRRLSRRALGFYARDAGVVQRTNLGILRALVCQESTKFKNVWTTHSKSPIAYERGRIYFDNYRCCVSSVASEPRKLYEMPKCSKSEKIEDALLWECPVGDILPDPSDYKSSLIALTAHNWLLRISATTGEVLEKIYLASYCKFRYLSWDTPQEVIAVKSAQNKGSAAARQAGTSPPVLLYLAVFRVLPFSLVGILEINKKVFENVTDATLSHGILIVMYSSGLVRLYSFQAIIEQFMQQKLDLGCACSQGGTTGTVGEAPFGIPCNVKITDSPPPLFEVSSLENAFQIGGHPWHYIITPNKKKQKGVFHICALKDNSLAKNGIQEMECCSLESDWIYFHPDASGRIIHVGPNQVKVLKLSEVENDSSQHQISEDFVIWAKREDRKENLITVTASGRVVKRNVSLLDDDPEQETFKIVDYEDELDLLSVVAVTQIDAEGKAHLDFHCNEYGTLLKSIPLVESWDVTYSHEVYFDRDLVLHIEQKPNRVFSCYVYQMVCDPGEEEEAVNRSG.

Helical transmembrane passes span V186 to I206 and G222 to I242.

As to quaternary structure, interacts with DDB1, CUL4A and CUL4B. As to expression, ubiquitously expressed in the embryo, with higher expression in brain, liver and skin tissues.

The protein resides in the membrane. The protein localises to the nucleus. It localises to the nucleolus. Its pathway is protein modification; protein ubiquitination. Functionally, may function as a substrate receptor for CUL4-DDB1 E3 ubiquitin-protein ligase complex. In Mus musculus (Mouse), this protein is DDB1- and CUL4-associated factor 17 (Dcaf17).